The primary structure comprises 315 residues: Type II methyltransferase M.Bsp6I (315 aa).

Positions 2–315 (LQIASLFAGV…IAENIYKSML (314 aa)) constitute an SAM-dependent MTase C5-type domain. Cysteine 73 is a catalytic residue.

It belongs to the class I-like SAM-binding methyltransferase superfamily. C5-methyltransferase family.

It carries out the reaction a 2'-deoxycytidine in DNA + S-adenosyl-L-methionine = a 5-methyl-2'-deoxycytidine in DNA + S-adenosyl-L-homocysteine + H(+). Functionally, a methylase that recognizes the double-stranded sequence 5'-GCNGC-3', methylates C-? on both strands, and protects the DNA from cleavage by the Bsp6I endonuclease. This Bacillus sp. (strain RFL6) protein is Type II methyltransferase M.Bsp6I.